The following is a 249-amino-acid chain: MILELDCGNSFIKWRVIQAVDATIVGGGIVDSDQALVAEVGTLASLRLSGCRIVSVRSEEETAALCTLIGQAFSVVPRVAEPAREMAGVRNGYEDFQRLGMDRWLAALGAFHLAKGACLVIDLGTAAKADFIGADGEHLGGYICPGMPLMRSQLRTHTRRIRYDDASAERALTSLAPGRSTVEAVERGCVLMLQGFARTQLEQARSLWGEAFTVFLTGGDAPLVREAAPQARVVPDLVFVGLAMACPLN.

An ATP-binding site is contributed by 6-13; that stretch reads DCGNSFIK. Substrate is bound by residues Tyr-93 and 100-103; that span reads GMDR. The active-site Proton acceptor is Asp-102. Asp-122 serves as a coordination point for K(+). Thr-125 lines the ATP pocket. Thr-181 is a substrate binding site.

It belongs to the type III pantothenate kinase family. Homodimer. Requires NH4(+) as cofactor. K(+) is required as a cofactor.

It is found in the cytoplasm. It catalyses the reaction (R)-pantothenate + ATP = (R)-4'-phosphopantothenate + ADP + H(+). It functions in the pathway cofactor biosynthesis; coenzyme A biosynthesis; CoA from (R)-pantothenate: step 1/5. Functionally, catalyzes the phosphorylation of pantothenate (Pan), the first step in CoA biosynthesis. The sequence is that of Type III pantothenate kinase from Pseudomonas putida (strain W619).